Consider the following 252-residue polypeptide: Methylthioribulose-1-phosphate dehydratase (252 aa).

Residue C105 participates in substrate binding. Zn(2+) contacts are provided by H123 and H125. Catalysis depends on E151, which acts as the Proton donor/acceptor. H208 is a binding site for Zn(2+).

This sequence belongs to the aldolase class II family. MtnB subfamily. Zn(2+) is required as a cofactor.

Its subcellular location is the cytoplasm. The enzyme catalyses 5-(methylsulfanyl)-D-ribulose 1-phosphate = 5-methylsulfanyl-2,3-dioxopentyl phosphate + H2O. The protein operates within amino-acid biosynthesis; L-methionine biosynthesis via salvage pathway; L-methionine from S-methyl-5-thio-alpha-D-ribose 1-phosphate: step 2/6. Functionally, catalyzes the dehydration of methylthioribulose-1-phosphate (MTRu-1-P) into 2,3-diketo-5-methylthiopentyl-1-phosphate (DK-MTP-1-P). The chain is Methylthioribulose-1-phosphate dehydratase from Sclerotinia sclerotiorum (strain ATCC 18683 / 1980 / Ss-1) (White mold).